We begin with the raw amino-acid sequence, 21 residues long: Major outer membrane protein (21 aa).

In terms of assembly, disulfide bond interactions within and between MOMP molecules and other components form high molecular-weight oligomers.

Its subcellular location is the cell outer membrane. Structural rigidity of the outer membrane of elementary bodies and porin forming, permitting diffusion of solutes through the intracellular reticulate body membrane. The sequence is that of Major outer membrane protein from Actinobacillus suis.